The following is a 556-amino-acid chain: 2-isopropylmalate synthase (556 aa).

The Pyruvate carboxyltransferase domain maps to 33–307 (PIWLSTDLRD…DPQLDFSDID (275 aa)). Residues D42, H246, H248, and N282 each contribute to the Mg(2+) site. Positions 439 to 556 (ASAPYALKGH…ALSQAESRAA (118 aa)) are regulatory domain.

The protein belongs to the alpha-IPM synthase/homocitrate synthase family. LeuA type 2 subfamily. As to quaternary structure, homodimer. It depends on Mg(2+) as a cofactor.

Its subcellular location is the cytoplasm. It catalyses the reaction 3-methyl-2-oxobutanoate + acetyl-CoA + H2O = (2S)-2-isopropylmalate + CoA + H(+). Its pathway is amino-acid biosynthesis; L-leucine biosynthesis; L-leucine from 3-methyl-2-oxobutanoate: step 1/4. Functionally, catalyzes the condensation of the acetyl group of acetyl-CoA with 3-methyl-2-oxobutanoate (2-ketoisovalerate) to form 3-carboxy-3-hydroxy-4-methylpentanoate (2-isopropylmalate). This Ectopseudomonas mendocina (strain ymp) (Pseudomonas mendocina) protein is 2-isopropylmalate synthase.